A 460-amino-acid chain; its full sequence is Ammonium transporter Rh type C (460 aa).

Residues Met1–Trp9 lie on the Cytoplasmic side of the membrane. The chain crosses the membrane as a helical span at residues Arg10–Val30. Over Arg31–Tyr61 the chain is Extracellular. Residue Asn48 is glycosylated (N-linked (GlcNAc...) asparagine). The chain crosses the membrane as a helical span at residues Pro62–Leu82. Topologically, residues Gln83–Val90 are cytoplasmic. Residues Gly91–Phe111 form a helical membrane-spanning segment. Residues His112–Asn125 lie on the Extracellular side of the membrane. Residues Leu126–Gly145 form a helical membrane-spanning segment. Residues Lys146 to Gln151 lie on the Cytoplasmic side of the membrane. A helical transmembrane segment spans residues Leu152 to Leu174. Residues Glu175 to Ala179 are Extracellular-facing. The chain crosses the membrane as a helical span at residues Gly180–Leu200. At Tyr201 to Asp219 the chain is on the cytoplasmic side. Residues Leu220–Val240 traverse the membrane as a helical segment. The Extracellular segment spans residues Ser241–Ala251. A helical transmembrane segment spans residues Ile252 to Leu272. Topologically, residues His273–Asn285 are cytoplasmic. A helical membrane pass occupies residues Ala286 to Gly306. A topological domain (extracellular) is located at residue Ser307. A helical membrane pass occupies residues Leu308–Phe328. Residues Leu329–Cys339 lie on the Cytoplasmic side of the membrane. A helical transmembrane segment spans residues Gly340–Ala360. The Extracellular segment spans residues Ser361–Ala396. A helical membrane pass occupies residues Ala397 to Leu417. Topologically, residues Lys418 to Pro460 are cytoplasmic.

Belongs to the ammonium transporter (TC 2.A.49) family. Rh subfamily. In terms of assembly, homotrimer. In terms of processing, N-glycosylated.

It localises to the apical cell membrane. It carries out the reaction NH4(+)(in) = NH4(+)(out). The enzyme catalyses methylamine(out) = methylamine(in). It catalyses the reaction CO2(out) = CO2(in). In terms of biological role, ammonium transporter involved in the maintenance of acid-base homeostasis. Transports ammonium and its related derivative methylammonium across the plasma membrane of epithelial cells likely contributing to renal transepithelial ammonia transport and ammonia metabolism. Postulated to primarily mediate an electroneutral bidirectional transport of NH3 ammonia species according to a mechanism that implies interaction of an NH4(+) ion with acidic residues of the pore entry followed by dissociation of NH4(+) into NH3 and H(+). As a result NH3 transits through the central pore and is protonated on the extracellular side reforming NH4(+). May act as a CO2 channel providing for renal acid secretion. The chain is Ammonium transporter Rh type C (RHCG) from Canis lupus familiaris (Dog).